Consider the following 288-residue polypeptide: Zinc finger protein ZAT9 (288 aa).

Residues 4–26 (YKCRVCFKSFVNGKALGGHMRSH) form a C2H2-type 1 zinc finger. Disordered regions lie at residues 20–82 (GGHM…LTRK), 101–123 (SQLGYKPESDQEPPHSSASDTTT), and 189–210 (GGHRASHKKNRVSNNKTEQRSE). A compositionally biased stretch (polar residues) spans 37 to 52 (PSQLSYETESDVSSSD). 2 consecutive C2H2-type zinc fingers follow at residues 173–195 (YKCETCGKVFKSYQALGGHRASH) and 224–246 (HECPICLRVFASGQALGGHKRSH).

The protein resides in the nucleus. Functionally, probable transcription factor that may be involved in stress responses. The sequence is that of Zinc finger protein ZAT9 (ZAT9) from Arabidopsis thaliana (Mouse-ear cress).